The sequence spans 173 residues: UPF0316 protein Bsph_0745 (173 aa).

3 helical membrane-spanning segments follow: residues 4–24 (IVLILILQLVYVPFLTLRTIF), 31–51 (FLAAIFGMLEMLVYVFGLSLV), and 58–78 (MLAMVVYAVGFGLGIFLGAKI).

Belongs to the UPF0316 family.

It localises to the cell membrane. The chain is UPF0316 protein Bsph_0745 from Lysinibacillus sphaericus (strain C3-41).